We begin with the raw amino-acid sequence, 110 residues long: Keratin-associated protein 6-3 (110 aa).

This sequence belongs to the KRTAP type 6 family. As to quaternary structure, interacts with hair keratins.

In the hair cortex, hair keratin intermediate filaments are embedded in an interfilamentous matrix, consisting of hair keratin-associated proteins (KRTAP), which are essential for the formation of a rigid and resistant hair shaft through their extensive disulfide bond cross-linking with abundant cysteine residues of hair keratins. The matrix proteins include the high-sulfur and high-glycine-tyrosine keratins. The sequence is that of Keratin-associated protein 6-3 from Homo sapiens (Human).